Reading from the N-terminus, the 249-residue chain is Ubiquinone/menaquinone biosynthesis C-methyltransferase UbiE (249 aa).

Residues Thr72, Asp93, and 121 to 122 contribute to the S-adenosyl-L-methionine site; that span reads DA.

It belongs to the class I-like SAM-binding methyltransferase superfamily. MenG/UbiE family.

The enzyme catalyses a 2-demethylmenaquinol + S-adenosyl-L-methionine = a menaquinol + S-adenosyl-L-homocysteine + H(+). It catalyses the reaction a 2-methoxy-6-(all-trans-polyprenyl)benzene-1,4-diol + S-adenosyl-L-methionine = a 5-methoxy-2-methyl-3-(all-trans-polyprenyl)benzene-1,4-diol + S-adenosyl-L-homocysteine + H(+). The protein operates within quinol/quinone metabolism; menaquinone biosynthesis; menaquinol from 1,4-dihydroxy-2-naphthoate: step 2/2. It functions in the pathway cofactor biosynthesis; ubiquinone biosynthesis. Methyltransferase required for the conversion of demethylmenaquinol (DMKH2) to menaquinol (MKH2) and the conversion of 2-polyprenyl-6-methoxy-1,4-benzoquinol (DDMQH2) to 2-polyprenyl-3-methyl-6-methoxy-1,4-benzoquinol (DMQH2). The sequence is that of Ubiquinone/menaquinone biosynthesis C-methyltransferase UbiE from Teredinibacter turnerae (strain ATCC 39867 / T7901).